Consider the following 318-residue polypeptide: Ribose-phosphate pyrophosphokinase (318 aa).

ATP-binding positions include 46–48 and 105–106; these read DGE and RQ. His139 and Asp178 together coordinate Mg(2+). Lys201 is an active-site residue. D-ribose 5-phosphate-binding positions include Arg203, Asp227, and 231–235; that span reads DTAGT.

Belongs to the ribose-phosphate pyrophosphokinase family. Class I subfamily. Homohexamer. Mg(2+) is required as a cofactor.

The protein localises to the cytoplasm. The enzyme catalyses D-ribose 5-phosphate + ATP = 5-phospho-alpha-D-ribose 1-diphosphate + AMP + H(+). Its pathway is metabolic intermediate biosynthesis; 5-phospho-alpha-D-ribose 1-diphosphate biosynthesis; 5-phospho-alpha-D-ribose 1-diphosphate from D-ribose 5-phosphate (route I): step 1/1. Its function is as follows. Involved in the biosynthesis of the central metabolite phospho-alpha-D-ribosyl-1-pyrophosphate (PRPP) via the transfer of pyrophosphoryl group from ATP to 1-hydroxyl of ribose-5-phosphate (Rib-5-P). This chain is Ribose-phosphate pyrophosphokinase, found in Helicobacter pylori (strain ATCC 700392 / 26695) (Campylobacter pylori).